We begin with the raw amino-acid sequence, 459 residues long: MAP kinase-interacting serine/threonine-protein kinase 2 (459 aa).

A disordered region spans residues 28–67 (LDPAQHGDSDFSPQCEARPDMPSSQPIDIPDAKKRGRKKK). The Nuclear localization signal motif lies at 60 to 66 (KKRGRKK). Position 74 is a phosphoserine (S74). Residues 84–368 (QLQEDVLGEG…AAQVLQHPWV (285 aa)) form the Protein kinase domain. ATP-binding positions include 90–98 (LGEGAHARV) and K113. 160–162 (EKM) serves as a coordination point for staurosporine. D205 acts as the Proton acceptor in catalysis. E209 contributes to the staurosporine binding site. T244 and T249 each carry phosphothreonine. C299, C311, and C314 together coordinate Zn(2+). At T379 the chain carries Phosphothreonine. Residues S431 and S434 each carry the phosphoserine modification. The MAP kinase binding motif lies at 438 to 442 (LAQRR). Position 446 is a phosphoserine (S446). The residue at position 450 (T450) is a Phosphothreonine.

The protein belongs to the protein kinase superfamily. CAMK Ser/Thr protein kinase family. Monomer. Interacts with the C-terminal regions of EIF4G1 and EIF4G2; this interaction is promoted when MAPK pathways are repressed but repressed upon ERK proteins activation. Also binds to dephosphorylated MAPK3/ERK1 and MAPK1/ER2K. Interaction with phosphorylated MAPK3/ERK1 and MAPK1/ER2K protects it from dephosphorylation and inactivation. Interacts with ESR2 and EIF4E in the nucleus. The cofactor is Mg(2+). It depends on Zn(2+) as a cofactor. Post-translationally, dual phosphorylation of Thr-244 and Thr-249 activates the kinase. Phosphorylation of Thr-379 activates the kinase. Phosphorylated upon arsenic trioxide As(2)O(3) treatment. Phosphorylated by MAPK1/ERK2, MAPK11 and MAPK14. Dephosphorylated by PP2A.

The protein localises to the cytoplasm. It is found in the nucleus. The protein resides in the PML body. It carries out the reaction L-seryl-[protein] + ATP = O-phospho-L-seryl-[protein] + ADP + H(+). The enzyme catalyses L-threonyl-[protein] + ATP = O-phospho-L-threonyl-[protein] + ADP + H(+). Inhibited by CGP57380 and staurosporine. In terms of biological role, serine/threonine-protein kinase that phosphorylates SFPQ/PSF, HNRNPA1 and EIF4E. May play a role in the response to environmental stress and cytokines. Appears to regulate translation by phosphorylating EIF4E, thus increasing the affinity of this protein for the 7-methylguanosine-containing mRNA cap. Required for mediating PP2A-inhibition-induced EIF4E phosphorylation. Triggers EIF4E shuttling from cytoplasm to nucleus. Enhances the formation of EIF4F complex in pachytene spermatocytes, thus promoting mRNA translation during spermatogenesis. Displays a high basal kinase activity. Acts as a mediator of the suppressive effects of IFNgamma on hematopoiesis. Negative regulator for signals that control generation of arsenic trioxide As(2)O(3)-dependent apoptosis and anti-leukemic responses. Involved in anti-apoptotic signaling in response to serum withdrawal. The protein is MAP kinase-interacting serine/threonine-protein kinase 2 (Mknk2) of Rattus norvegicus (Rat).